Here is a 415-residue protein sequence, read N- to C-terminus: Ribulose bisphosphate carboxylase large chain (415 aa).

Substrate contacts are provided by Asn101 and Thr151. Lys153 functions as the Proton acceptor in the catalytic mechanism. Residue Lys155 coordinates substrate. Mg(2+) contacts are provided by Lys179, Asp181, and Glu182. The residue at position 179 (Lys179) is an N6-carboxylysine. His272 serves as the catalytic Proton acceptor. Substrate is bound by residues Arg273, His305, and Ser357.

Belongs to the RuBisCO large chain family. Type I subfamily. In terms of assembly, heterohexadecamer of 8 large chains and 8 small chains; disulfide-linked. The disulfide link is formed within the large subunit homodimers. Mg(2+) serves as cofactor. Post-translationally, the disulfide bond which can form in the large chain dimeric partners within the hexadecamer appears to be associated with oxidative stress and protein turnover.

Its subcellular location is the plastid. The protein resides in the chloroplast. The enzyme catalyses 2 (2R)-3-phosphoglycerate + 2 H(+) = D-ribulose 1,5-bisphosphate + CO2 + H2O. It carries out the reaction D-ribulose 1,5-bisphosphate + O2 = 2-phosphoglycolate + (2R)-3-phosphoglycerate + 2 H(+). In terms of biological role, ruBisCO catalyzes two reactions: the carboxylation of D-ribulose 1,5-bisphosphate, the primary event in carbon dioxide fixation, as well as the oxidative fragmentation of the pentose substrate in the photorespiration process. Both reactions occur simultaneously and in competition at the same active site. The chain is Ribulose bisphosphate carboxylase large chain from Cibotium barometz (Scythian lamb).